We begin with the raw amino-acid sequence, 329 residues long: Bile salt hydrolase/transferase (329 aa).

Cys-2 acts as the Nucleophile; acyl-thioester intermediate in catalysis. Deoxycholate-binding residues include Cys-2 and Arg-18. Asn-82 contacts taurine.

Belongs to the peptidase C59 family. Homotetramer. The tetramer consists of a dimer of dimers.

The catalysed reaction is glycocholate + H2O = cholate + glycine. It catalyses the reaction cholate + taurine = taurocholate + H2O. It carries out the reaction taurodeoxycholate + H2O = deoxycholate + taurine. The enzyme catalyses glycodeoxycholate + H2O = deoxycholate + glycine. The catalysed reaction is chenodeoxycholate + glycine = glycochenodeoxycholate + H2O. It catalyses the reaction taurochenodeoxycholate + H2O = chenodeoxycholate + taurine. It carries out the reaction an L-alpha-amino acid + cholate = an N-choloyl-L-alpha-amino acid + H2O. The enzyme catalyses an L-alpha-amino acid + taurocholate = an N-choloyl-L-alpha-amino acid + taurine. The catalysed reaction is glycocholate + an L-alpha-amino acid = an N-choloyl-L-alpha-amino acid + glycine. It catalyses the reaction cholate + L-histidine = L-histidocholate + H2O. It carries out the reaction taurocholate + L-histidine = L-histidocholate + taurine. The enzyme catalyses glycocholate + L-histidine = L-histidocholate + glycine. The catalysed reaction is cholate + L-arginine = L-arginocholate + H2O. It catalyses the reaction taurocholate + L-arginine = L-arginocholate + taurine. It carries out the reaction glycocholate + L-arginine = L-arginocholate + glycine. The enzyme catalyses cholate + L-phenylalanine = L-phenylalanocholate + H2O. The catalysed reaction is taurocholate + L-phenylalanine = L-phenylalanocholate + taurine. Its pathway is lipid metabolism; bile acid biosynthesis. Its function is as follows. Possesses dual functions in bile acid metabolism. Acts as a bile salt hydrolase that catalyzes the deconjugation of glycine- and taurine-linked bile salts, which occurs naturally in the intestines of humans, releasing amino acid residues and deconjugated bile salts (bile acids). Can hydrolyze the amide bond in major human conjugated bile salts, such as glycocholate (GCA), taurocholate (TCA) and taurodeoxycholate (TDCA). Shows a slight preference for taurine-conjugated bile acids as substrates. Also acts as an amine N-acyltransferase that conjugates a wide variety of amino acids to conjugated and non-conjugated bile acids, thus producing bacterial bile acid amidates (BBAAs) - also named microbially conjugated bile acids (MCBAs) - in the gastrointestinal tract. These BBAAs may facilitate communication between the microbiota and host through the activation of human ligand-activated transcription factors. This chain is Bile salt hydrolase/transferase (cbh), found in Clostridium perfringens (strain 13 / Type A).